The following is a 295-amino-acid chain: sn-glycerol-3-phosphate transport system permease protein UgpA (295 aa).

Over 1-11 (MTSSRPVFRSS) the chain is Cytoplasmic. A helical membrane pass occupies residues 12–32 (WLPYVLVLPQLLITVIFFIWP). Topologically, residues 33–76 (AGQALWYSVQNLDPFGLSSEFVGMENFRQLFNNPYYLDSFYTTL) are periplasmic. Residues 76–284 (LIFSFLVAGF…LLVIGLTVIQ (209 aa)) enclose the ABC transmembrane type-1 domain. A helical membrane pass occupies residues 77 to 97 (IFSFLVAGFGMLISLFLAALV). The Cytoplasmic segment spans residues 98-109 (DYVIRASRLYQT). The helical transmembrane segment at 110-130 (LIILPYAVAPAVAAVLWMFLF) threads the bilayer. Residues 131–157 (NPGLGLITHFLGLLGYTWNHAQDSGQA) lie on the Periplasmic side of the membrane. A helical transmembrane segment spans residues 158 to 178 (MFLVVLASVWKQISYNFLFFL). The Cytoplasmic segment spans residues 179–207 (AALQSIPRSLVEAGAIDGAGPVRRFFNLV). Residues 208–228 (LPMISPVSFFLLVVNLVYAFF) form a helical membrane-spanning segment. Over 229–262 (DTFPIIDAATAGGPVQSTTTLIYKIYREGFAGLD) the chain is Periplasmic. Residues 263-283 (LSSSAAQSVILMLLVIGLTVI) form a helical membrane-spanning segment. Residues 284–295 (QFRFVERKVNYQ) are Cytoplasmic-facing.

This sequence belongs to the binding-protein-dependent transport system permease family. UgpAE subfamily. In terms of assembly, the complex is composed of two ATP-binding proteins (UgpC), two transmembrane proteins (UgpA and UgpE) and a solute-binding protein (UgpB).

The protein resides in the cell inner membrane. Functionally, part of the ABC transporter complex UgpBAEC involved in sn-glycerol-3-phosphate (G3P) import. Probably responsible for the translocation of the substrate across the membrane. In Pectobacterium atrosepticum (strain SCRI 1043 / ATCC BAA-672) (Erwinia carotovora subsp. atroseptica), this protein is sn-glycerol-3-phosphate transport system permease protein UgpA (ugpA).